Consider the following 533-residue polypeptide: D-2-hydroxyglutarate dehydrogenase, mitochondrial (533 aa).

Residues 1–55 constitute a mitochondrion transit peptide; it reads MGLFQKCSRLSLRSSYMWSVCPQYSIAVTARETPDRALIVHWTQHRDVHNSRRLG. Residues 107-286 enclose the FAD-binding PCMH-type domain; sequence VQGSSDVLLR…TAVSILCPRK (180 aa). (R)-2-hydroxyglutarate is bound by residues R397, T401, and K412. Residue R397 coordinates (R)-lactate. 3 residues coordinate (R)-malate: R397, T401, and K412. The Zn(2+) site is built by H445 and H452. N454 is a binding site for (R)-2-hydroxyglutarate. E486 contacts Zn(2+). Residue H487 coordinates (R)-2-hydroxyglutarate. H487 serves as a coordination point for (R)-lactate. Position 487 (H487) interacts with (R)-malate.

The protein belongs to the FAD-binding oxidoreductase/transferase type 4 family. The cofactor is FAD.

It localises to the mitochondrion. The enzyme catalyses (R)-2-hydroxyglutarate + A = 2-oxoglutarate + AH2. It carries out the reaction (R)-malate + A = oxaloacetate + AH2. In terms of biological role, catalyzes the oxidation of D-2-hydroxyglutarate (D-2-HG) to alpha-ketoglutarate. Also catalyzes the oxidation of other D-2-hydroxyacids, such as D-malate (D-MAL) and D-lactate (D-LAC). Exhibits high activities towards D-2-HG and D-MAL but a very weak activity towards D-LAC. The protein is D-2-hydroxyglutarate dehydrogenase, mitochondrial (d2hgdh) of Danio rerio (Zebrafish).